A 114-amino-acid chain; its full sequence is KVHQVIGAVVDVKFRVPVGAGTLGRIINVTGDPIDERGKIGLFGGAGVGKTKVALVFGQMNEPPGARARFTQAGSEVSALLGRMRGISELGIYPAVDPLDSKSRVQQMLQEYKS.

Residue 44–51 coordinates ATP; sequence GGAGVGKT.

The protein belongs to the ATPase alpha/beta chains family. In terms of assembly, F-type ATPases have 2 components, CF(1) - the catalytic core - and CF(0) - the membrane proton channel. CF(1) has five subunits: alpha(3), beta(3), gamma(1), delta(1), epsilon(1). CF(0) has three main subunits: a, b and c.

The protein resides in the mitochondrion. It is found in the mitochondrion inner membrane. The catalysed reaction is ATP + H2O + 4 H(+)(in) = ADP + phosphate + 5 H(+)(out). Its function is as follows. Mitochondrial membrane ATP synthase (F(1)F(0) ATP synthase or Complex V) produces ATP from ADP in the presence of a proton gradient across the membrane which is generated by electron transport complexes of the respiratory chain. F-type ATPases consist of two structural domains, F(1) - containing the extramembraneous catalytic core, and F(0) - containing the membrane proton channel, linked together by a central stalk and a peripheral stalk. During catalysis, ATP synthesis in the catalytic domain of F(1) is coupled via a rotary mechanism of the central stalk subunits to proton translocation. Subunits alpha and beta form the catalytic core in F(1). Rotation of the central stalk against the surrounding alpha(3)beta(3) subunits leads to hydrolysis of ATP in three separate catalytic sites on the beta subunits. The chain is ATP synthase subunit beta, mitochondrial (atp2) from Penicillium glabrum (Penicillium frequentans).